We begin with the raw amino-acid sequence, 243 residues long: MILIPAIDLMGKKVVRLTQGEKERKTEYPISPVELALKYQEAGARLIHVVDLDRAFTGESENFEVIAEIIKNVSIPVQVGGGIRDIESFRELIDLGVSRVIVGTIAVTNPELLEEMLTLDRDKVAVGIDAKNGWVAIKGWVESSNYRALDLAYKVKEMGVTTIIYTDIARDGSLTGPNFNETLKLAIDTGLKVIASGGISGLEDLRRWRELGENKIYGVIAGKAILEGKIDLKEGIRILEGES.

D8 (proton acceptor) is an active-site residue. The active-site Proton donor is the D129.

It belongs to the HisA/HisF family.

The protein localises to the cytoplasm. The enzyme catalyses 1-(5-phospho-beta-D-ribosyl)-5-[(5-phospho-beta-D-ribosylamino)methylideneamino]imidazole-4-carboxamide = 5-[(5-phospho-1-deoxy-D-ribulos-1-ylimino)methylamino]-1-(5-phospho-beta-D-ribosyl)imidazole-4-carboxamide. It functions in the pathway amino-acid biosynthesis; L-histidine biosynthesis; L-histidine from 5-phospho-alpha-D-ribose 1-diphosphate: step 4/9. In Carboxydothermus hydrogenoformans (strain ATCC BAA-161 / DSM 6008 / Z-2901), this protein is 1-(5-phosphoribosyl)-5-[(5-phosphoribosylamino)methylideneamino] imidazole-4-carboxamide isomerase.